The chain runs to 262 residues: Acyl-[acyl-carrier-protein]--UDP-N-acetylglucosamine O-acyltransferase (262 aa).

It belongs to the transferase hexapeptide repeat family. LpxA subfamily. In terms of assembly, homotrimer.

It localises to the cytoplasm. It carries out the reaction a (3R)-hydroxyacyl-[ACP] + UDP-N-acetyl-alpha-D-glucosamine = a UDP-3-O-[(3R)-3-hydroxyacyl]-N-acetyl-alpha-D-glucosamine + holo-[ACP]. It participates in glycolipid biosynthesis; lipid IV(A) biosynthesis; lipid IV(A) from (3R)-3-hydroxytetradecanoyl-[acyl-carrier-protein] and UDP-N-acetyl-alpha-D-glucosamine: step 1/6. Involved in the biosynthesis of lipid A, a phosphorylated glycolipid that anchors the lipopolysaccharide to the outer membrane of the cell. This chain is Acyl-[acyl-carrier-protein]--UDP-N-acetylglucosamine O-acyltransferase, found in Haemophilus influenzae (strain PittEE).